Here is a 140-residue protein sequence, read N- to C-terminus: Large ribosomal subunit protein bL17 (140 aa).

The protein belongs to the bacterial ribosomal protein bL17 family. In terms of assembly, part of the 50S ribosomal subunit. Contacts protein L32.

The protein is Large ribosomal subunit protein bL17 of Gluconobacter oxydans (strain 621H) (Gluconobacter suboxydans).